Here is a 52-residue protein sequence, read N- to C-terminus: uncharacterized protein (52 aa).

This is an uncharacterized protein from Bacillus subtilis (strain 168).